The following is a 247-amino-acid chain: 2,3-bisphosphoglycerate-dependent phosphoglycerate mutase (247 aa).

Substrate contacts are provided by residues 8–15 (RHGQSLWN), 21–22 (TG), Arg-60, 87–90 (ERHY), Lys-98, 114–115 (RR), and 183–184 (GN). The active-site Tele-phosphohistidine intermediate is the His-9. Glu-87 acts as the Proton donor/acceptor in catalysis.

The protein belongs to the phosphoglycerate mutase family. BPG-dependent PGAM subfamily.

It catalyses the reaction (2R)-2-phosphoglycerate = (2R)-3-phosphoglycerate. It participates in carbohydrate degradation; glycolysis; pyruvate from D-glyceraldehyde 3-phosphate: step 3/5. In terms of biological role, catalyzes the interconversion of 2-phosphoglycerate and 3-phosphoglycerate. This is 2,3-bisphosphoglycerate-dependent phosphoglycerate mutase from Hydrogenobaculum sp. (strain Y04AAS1).